The chain runs to 950 residues: Glycine dehydrogenase (decarboxylating) (950 aa).

Residue Lys698 is modified to N6-(pyridoxal phosphate)lysine.

Belongs to the GcvP family. As to quaternary structure, the glycine cleavage system is composed of four proteins: P, T, L and H. It depends on pyridoxal 5'-phosphate as a cofactor.

The catalysed reaction is N(6)-[(R)-lipoyl]-L-lysyl-[glycine-cleavage complex H protein] + glycine + H(+) = N(6)-[(R)-S(8)-aminomethyldihydrolipoyl]-L-lysyl-[glycine-cleavage complex H protein] + CO2. Functionally, the glycine cleavage system catalyzes the degradation of glycine. The P protein binds the alpha-amino group of glycine through its pyridoxal phosphate cofactor; CO(2) is released and the remaining methylamine moiety is then transferred to the lipoamide cofactor of the H protein. The polypeptide is Glycine dehydrogenase (decarboxylating) (Neisseria gonorrhoeae (strain ATCC 700825 / FA 1090)).